Consider the following 412-residue polypeptide: Multifunctional CCA protein (412 aa).

2 residues coordinate ATP: Gly8 and Arg11. Residues Gly8 and Arg11 each coordinate CTP. The Mg(2+) site is built by Asp21 and Asp23. Residues Arg91, Arg137, and Arg140 each coordinate ATP. CTP-binding residues include Arg91, Arg137, and Arg140. The region spanning 228-329 (TGIHTMMVLE…VKLFDKADFW (102 aa)) is the HD domain.

Belongs to the tRNA nucleotidyltransferase/poly(A) polymerase family. Bacterial CCA-adding enzyme type 1 subfamily. Monomer. Can also form homodimers and oligomers. Mg(2+) serves as cofactor. It depends on Ni(2+) as a cofactor.

The catalysed reaction is a tRNA precursor + 2 CTP + ATP = a tRNA with a 3' CCA end + 3 diphosphate. It carries out the reaction a tRNA with a 3' CCA end + 2 CTP + ATP = a tRNA with a 3' CCACCA end + 3 diphosphate. In terms of biological role, catalyzes the addition and repair of the essential 3'-terminal CCA sequence in tRNAs without using a nucleic acid template. Adds these three nucleotides in the order of C, C, and A to the tRNA nucleotide-73, using CTP and ATP as substrates and producing inorganic pyrophosphate. tRNA 3'-terminal CCA addition is required both for tRNA processing and repair. Also involved in tRNA surveillance by mediating tandem CCA addition to generate a CCACCA at the 3' terminus of unstable tRNAs. While stable tRNAs receive only 3'-terminal CCA, unstable tRNAs are marked with CCACCA and rapidly degraded. This is Multifunctional CCA protein from Shewanella pealeana (strain ATCC 700345 / ANG-SQ1).